The chain runs to 394 residues: DNA replication and repair protein RecF (394 aa).

30–37 is an ATP binding site; the sequence is GPNAAGKT.

It belongs to the RecF family.

It is found in the cytoplasm. Its function is as follows. The RecF protein is involved in DNA metabolism; it is required for DNA replication and normal SOS inducibility. RecF binds preferentially to single-stranded, linear DNA. It also seems to bind ATP. The protein is DNA replication and repair protein RecF of Roseiflexus castenholzii (strain DSM 13941 / HLO8).